The primary structure comprises 567 residues: Interferon lambda receptor 1 (567 aa).

Residues 1 to 22 (MSAWRIRVLATLCFLWQPRVHG) form the signal peptide. The Extracellular portion of the chain corresponds to 23–229 (QLPPPQNVTL…YEGEWKFPFS (207 aa)). A Fibronectin type-III domain is found at 26-121 (PPQNVTLLSK…KSQFKEYHLD (96 aa)). Residue N29 is glycosylated (N-linked (GlcNAc...) asparagine). Intrachain disulfides connect C74–C82, C86–C149, and C193–C215. N141 carries an N-linked (GlcNAc...) asparagine glycan. The chain crosses the membrane as a helical span at residues 230-250 (ATIPVFVLLILLTSASIIWLL). Residues 251–567 (KQDAKHKKMP…YQHSHYMRRS (317 aa)) are Cytoplasmic-facing.

It belongs to the type II cytokine receptor family. As to quaternary structure, heterodimer with IL10RB.

Its subcellular location is the membrane. The IFNLR1/IL10RB dimer is a receptor for the cytokine ligands IFNL2 and IFNL3 and mediates their antiviral activity. The ligand/receptor complex stimulate the activation of the JAK/STAT signaling pathway leading to the expression of IFN-stimulated genes (ISG), which contribute to the antiviral state. Determines the cell type specificity of the lambda interferon action. Shows a more restricted pattern of expression in the epithelial tissues thereby limiting responses to lambda interferons primarily to epithelial cells of the respiratory, gastrointestinal, and reproductive tracts. The polypeptide is Interferon lambda receptor 1 (IFNLR1) (Gallus gallus (Chicken)).